A 476-amino-acid polypeptide reads, in one-letter code: Sulfate adenylyltransferase subunit 1 (476 aa).

In terms of domain architecture, tr-type G spans 24–243; that stretch reads KSLLRFLTCG…VDVEKEKEAG (220 aa). Positions 33 to 40 are G1; the sequence is GSVDDGKS. 33–40 is a binding site for GTP; it reads GSVDDGKS. A G2 region spans residues 91-95; the sequence is GITID. The segment at 112–115 is G3; the sequence is DTPG. GTP is bound by residues 112-116 and 167-170; these read DTPGH and NKMD. The interval 167–170 is G4; sequence NKMD. The G5 stretch occupies residues 205-207; that stretch reads SAL.

It belongs to the TRAFAC class translation factor GTPase superfamily. Classic translation factor GTPase family. CysN/NodQ subfamily. Heterodimer composed of CysD, the smaller subunit, and CysN.

It carries out the reaction sulfate + ATP + H(+) = adenosine 5'-phosphosulfate + diphosphate. The protein operates within sulfur metabolism; hydrogen sulfide biosynthesis; sulfite from sulfate: step 1/3. Functionally, with CysD forms the ATP sulfurylase (ATPS) that catalyzes the adenylation of sulfate producing adenosine 5'-phosphosulfate (APS) and diphosphate, the first enzymatic step in sulfur assimilation pathway. APS synthesis involves the formation of a high-energy phosphoric-sulfuric acid anhydride bond driven by GTP hydrolysis by CysN coupled to ATP hydrolysis by CysD. This Vibrio vulnificus (strain YJ016) protein is Sulfate adenylyltransferase subunit 1.